The chain runs to 516 residues: Putative thymidine phosphorylase (516 aa).

The protein belongs to the thymidine/pyrimidine-nucleoside phosphorylase family. Type 2 subfamily.

It carries out the reaction thymidine + phosphate = 2-deoxy-alpha-D-ribose 1-phosphate + thymine. The polypeptide is Putative thymidine phosphorylase (Methylococcus capsulatus (strain ATCC 33009 / NCIMB 11132 / Bath)).